Here is a 1008-residue protein sequence, read N- to C-terminus: Serine/threonine-protein kinase PRP4 homolog (1008 aa).

The interval 1–103 (MAAAEAPSLR…PAKRTKLDDL (103 aa)) is disordered. A2 carries the N-acetylalanine modification. S8, S20, S23, and S32 each carry phosphoserine. 2 stretches are compositionally biased toward basic residues: residues 39–59 (KHSR…KHKH) and 67–81 (RKHK…HKRK). The span at 82 to 91 (EVADASDKEG) shows a compositional bias: basic and acidic residues. 2 positions are modified to phosphoserine: S87 and S93. K99 carries the N6-acetyllysine; alternate modification. K99 is covalently cross-linked (Glycyl lysine isopeptide (Lys-Gly) (interchain with G-Cter in SUMO2); alternate). K111 participates in a covalent cross-link: Glycyl lysine isopeptide (Lys-Gly) (interchain with G-Cter in SUMO2). A Glycyl lysine isopeptide (Lys-Gly) (interchain with G-Cter in SUMO2); alternate cross-link involves residue K117. K117 is covalently cross-linked (Glycyl lysine isopeptide (Lys-Gly) (interchain with G-Cter in SUMO1); alternate). S131 is subject to Phosphoserine. A Phosphotyrosine modification is found at Y140. 2 disordered regions span residues 140 to 536 (YESG…EDEE) and 560 to 584 (SNLS…SPDD). A phosphoserine mark is found at S142, S144, and S166. Positions 157–168 (GNRSSTRSSSTK) are enriched in low complexity. Residues K170 and K177 each participate in a glycyl lysine isopeptide (Lys-Gly) (interchain with G-Cter in SUMO2) cross-link. 2 stretches are compositionally biased toward basic residues: residues 179–202 (STKK…KKSK) and 214–230 (RSKS…SKRS). Phosphoserine is present on residues S239, S241, S257, S277, S283, S292, and S294. Basic and acidic residues predominate over residues 247 to 270 (RSQEKVGKARSPVDDKAKVEDKSK). Residues 302–315 (SKDRRSRSKERKSK) show a composition bias toward basic residues. Residues 316–325 (RPEADKEKKP) show a composition bias toward basic and acidic residues. 5 positions are modified to phosphoserine: S328, S354, S356, S366, and S368. The span at 342–367 (PSRRPGRSPKRRSLSPKQRDKSRRSR) shows a compositional bias: basic residues. T385 carries the phosphothreonine modification. S387 carries the post-translational modification Phosphoserine. 2 stretches are compositionally biased toward basic and acidic residues: residues 395–408 (RSLE…ERRR) and 415–429 (RPRD…RSKD). 3 positions are modified to phosphoserine: S427, S431, and S437. Residues 438 to 498 (PARRRASRSP…RGGRRRRSRS (61 aa)) show a composition bias toward basic residues. Phosphoserine is present on residues S519, S520, S521, S566, S570, S577, S579, and S581. The span at 519–536 (SSSDDNLEDFDVEEEDEE) shows a compositional bias: acidic residues. Residues 563-582 (SVPSEPSSPQSSTRSRSPSP) show a composition bias toward low complexity. Glycyl lysine isopeptide (Lys-Gly) (interchain with G-Cter in SUMO2) cross-links involve residues K594 and K660. In terms of domain architecture, Protein kinase spans 688–1004 (YNVYGYTGQG…INQALQHAFI (317 aa)). ATP is bound by residues 694 to 702 (TGQGVFSNV) and K718. N6-acetyllysine is present on K718. The active-site Proton acceptor is the D816. A Phosphotyrosine modification is found at Y850. A Phosphoserine modification is found at S853.

Belongs to the protein kinase superfamily. CMGC Ser/Thr protein kinase family. In terms of assembly, interacts with CLK1 C-terminus. Associates with the U5 snRNP and NCOR1 deacetylase complexes. Identified in the spliceosome C complex. In terms of processing, phosphorylated by CLK1. Autophosphorylated; phosphorylation inhibits interaction with its targets, such as PRPF6 or SMARCA4.

The protein resides in the nucleus. Its subcellular location is the chromosome. It localises to the centromere. It is found in the kinetochore. The catalysed reaction is L-seryl-[protein] + ATP = O-phospho-L-seryl-[protein] + ADP + H(+). It carries out the reaction L-threonyl-[protein] + ATP = O-phospho-L-threonyl-[protein] + ADP + H(+). Functionally, serine/threonine kinase involved in spliceosomal assembly as well as mitosis and signaling regulation. Connects chromatin mediated regulation of transcription and pre-mRNA splicing. During spliceosomal assembly, interacts with and phosphorylates PRPF6 and PRPF31, components of the U4/U6-U5 tri-small nuclear ribonucleoprotein (snRNP), to facilitate the formation of the spliceosome B complex. Plays a role in regulating transcription and the spindle assembly checkpoint (SAC). Associates with U5 snRNP and NCOR1 deacetylase complexes which may allow a coordination of pre-mRNA splicing with chromatin remodeling events involved in transcriptional regulation. Associates and probably phosphorylates SMARCA4 and NCOR1. Phosphorylates SRSF1. Associates with kinetochores during mitosis and is necessary for recruitment and maintenance of the checkpoint proteins such as MAD1L1 and MAD12L1 at the kinetochores. Phosphorylates and regulates the activity of the transcription factors such as ELK1 and KLF13. Phosphorylates nuclear YAP1 and WWTR1/TAZ which induces nuclear exclusion and regulates Hippo signaling pathway, involved in tissue growth control. This Bos taurus (Bovine) protein is Serine/threonine-protein kinase PRP4 homolog (PRP4K).